The sequence spans 92 residues: Acylphosphatase (92 aa).

The Acylphosphatase-like domain occupies 6 to 92 (RMYVIVYGIV…TGEFASFDTY (87 aa)). Catalysis depends on residues Arg21 and Asn39.

This sequence belongs to the acylphosphatase family.

The catalysed reaction is an acyl phosphate + H2O = a carboxylate + phosphate + H(+). The chain is Acylphosphatase (acyP) from Sulfolobus acidocaldarius (strain ATCC 33909 / DSM 639 / JCM 8929 / NBRC 15157 / NCIMB 11770).